The following is a 43-amino-acid chain: Iota-conotoxin-like S11.2 (43 aa).

4 disulfides stabilise this stretch: C2-C16, C9-C19, C15-C24, and C18-C35. At M41 the chain carries D-methionine. Position 43 (R43) is a propeptide, removed by a carboxypeptidase.

Belongs to the conotoxin I1 superfamily. In terms of tissue distribution, expressed by the venom duct.

It localises to the secreted. In terms of biological role, iota-conotoxins bind to voltage-gated sodium channels (Nav) and act as agonists by shifting the voltage-dependence of activation to more hyperpolarized levels. Produces general excitatory symptoms. The chain is Iota-conotoxin-like S11.2 from Conus striatus (Striated cone).